Here is a 423-residue protein sequence, read N- to C-terminus: Serine--tRNA ligase (423 aa).

230 to 232 (TAE) lines the L-serine pocket. 261–263 (RSE) provides a ligand contact to ATP. Position 284 (glutamate 284) interacts with L-serine. 348 to 351 (EISS) provides a ligand contact to ATP. Serine 383 contacts L-serine.

This sequence belongs to the class-II aminoacyl-tRNA synthetase family. Type-1 seryl-tRNA synthetase subfamily. In terms of assembly, homodimer. The tRNA molecule binds across the dimer.

The protein resides in the cytoplasm. The catalysed reaction is tRNA(Ser) + L-serine + ATP = L-seryl-tRNA(Ser) + AMP + diphosphate + H(+). The enzyme catalyses tRNA(Sec) + L-serine + ATP = L-seryl-tRNA(Sec) + AMP + diphosphate + H(+). It functions in the pathway aminoacyl-tRNA biosynthesis; selenocysteinyl-tRNA(Sec) biosynthesis; L-seryl-tRNA(Sec) from L-serine and tRNA(Sec): step 1/1. Its function is as follows. Catalyzes the attachment of serine to tRNA(Ser). Is also able to aminoacylate tRNA(Sec) with serine, to form the misacylated tRNA L-seryl-tRNA(Sec), which will be further converted into selenocysteinyl-tRNA(Sec). In Levilactobacillus brevis (strain ATCC 367 / BCRC 12310 / CIP 105137 / JCM 1170 / LMG 11437 / NCIMB 947 / NCTC 947) (Lactobacillus brevis), this protein is Serine--tRNA ligase.